The following is a 256-amino-acid chain: Thiazole synthase (256 aa).

Lys-99 acts as the Schiff-base intermediate with DXP in catalysis. 1-deoxy-D-xylulose 5-phosphate-binding positions include Gly-160, 186-187 (AG), and 208-209 (NT).

It belongs to the ThiG family. In terms of assembly, homotetramer. Forms heterodimers with either ThiH or ThiS.

It is found in the cytoplasm. It catalyses the reaction [ThiS sulfur-carrier protein]-C-terminal-Gly-aminoethanethioate + 2-iminoacetate + 1-deoxy-D-xylulose 5-phosphate = [ThiS sulfur-carrier protein]-C-terminal Gly-Gly + 2-[(2R,5Z)-2-carboxy-4-methylthiazol-5(2H)-ylidene]ethyl phosphate + 2 H2O + H(+). It participates in cofactor biosynthesis; thiamine diphosphate biosynthesis. Its function is as follows. Catalyzes the rearrangement of 1-deoxy-D-xylulose 5-phosphate (DXP) to produce the thiazole phosphate moiety of thiamine. Sulfur is provided by the thiocarboxylate moiety of the carrier protein ThiS. In vitro, sulfur can be provided by H(2)S. This Neorickettsia sennetsu (strain ATCC VR-367 / Miyayama) (Ehrlichia sennetsu) protein is Thiazole synthase.